A 299-amino-acid chain; its full sequence is Acetylglutamate kinase (299 aa).

Substrate-binding positions include 68–69 (GG), Arg-90, and Asn-195.

The protein belongs to the acetylglutamate kinase family. ArgB subfamily.

Its subcellular location is the cytoplasm. It carries out the reaction N-acetyl-L-glutamate + ATP = N-acetyl-L-glutamyl 5-phosphate + ADP. It participates in amino-acid biosynthesis; L-arginine biosynthesis; N(2)-acetyl-L-ornithine from L-glutamate: step 2/4. Catalyzes the ATP-dependent phosphorylation of N-acetyl-L-glutamate. This is Acetylglutamate kinase from Erythrobacter litoralis (strain HTCC2594).